Consider the following 351-residue polypeptide: Small ribosomal subunit protein uS2 (351 aa).

The disordered stretch occupies residues 302 to 351 (QNNYDPSKRGYNPKYVNHKSTFNKFNNKKPAEATSQAKTNEKIVIKAETN). The span at 340-351 (TNEKIVIKAETN) shows a compositional bias: basic and acidic residues.

Belongs to the universal ribosomal protein uS2 family.

This is Small ribosomal subunit protein uS2 from Ureaplasma urealyticum serovar 10 (strain ATCC 33699 / Western).